We begin with the raw amino-acid sequence, 690 residues long: NF-kappa-B-repressing factor (690 aa).

An active repression domain region spans residues 1-296; it reads MEKILQMAEG…FKHTFGEDLV (296 aa). The short motif at 25 to 45 is the Nuclear localization signal element; it reads KPSKGQKRHLSTCDGQNPPKK. Disordered stretches follow at residues 27–87 and 132–163; these read SKGQ…NEQT and MYFD…QTFP. A Glycyl lysine isopeptide (Lys-Gly) (interchain with G-Cter in SUMO2) cross-link involves residue Lys68. A compositionally biased stretch (low complexity) spans 142-163; sequence STTSQQANSQSTPEPSPSQTFP. Residues 296-388 mediate DNA binding; sequence VVCQIGMSSY…RVFLQDHCLA (93 aa). Positions 414 to 431 are enriched in polar residues; the sequence is PTYPSVKSSQCHTGSSPR. The tract at residues 414 to 437 is disordered; that stretch reads PTYPSVKSSQCHTGSSPRGSGKKK. Lys500 is covalently cross-linked (Glycyl lysine isopeptide (Lys-Gly) (interchain with G-Cter in SUMO2)). The 46-residue stretch at 551 to 596 folds into the G-patch domain; sequence EDNIGNQLLRKMGWTGGGLGKSGEGIREPISVKEQHKREGLGLDVE. Positions 600–664 constitute an R3H domain; the sequence is KIAKRDIEQI…DRYLVVGRKR (65 aa). Phosphoserine is present on Ser618. Glycyl lysine isopeptide (Lys-Gly) (interchain with G-Cter in SUMO2) cross-links involve residues Lys666 and Lys674.

As to quaternary structure, interacts with NF-kappa-B. Interacts with XRN2. Interacts (via G-patch domain) with DHX15; promoting the RNA helicase activity of DHX15. Widely and constitutively expressed. Expressed at lower level in colon, peripheral blood lymphocytes, lung and kidney.

The protein resides in the nucleus. The protein localises to the nucleolus. Enhances the ATPase activity of DHX15 by acting like a brace that tethers mobile sections of DHX15 together, stabilizing a functional conformation with high RNA affinity of DHX15. Involved in the constitutive silencing of the interferon beta promoter, independently of the virus-induced signals, and in the inhibition of the basal and cytokine-induced iNOS promoter activity. Also involved in the regulation of IL-8 transcription. May also act as a DNA-binding transcription regulator: interacts with a specific negative regulatory element (NRE) 5'-AATTCCTCTGA-3' to mediate transcriptional repression of certain NK-kappa-B responsive genes. This Homo sapiens (Human) protein is NF-kappa-B-repressing factor.